The sequence spans 333 residues: Homeobox protein engrailed-1 (333 aa).

The segment covering 1 to 14 has biased composition (basic and acidic residues); it reads MEEPPEGHGHHRDA. Disordered stretches follow at residues 1–184 and 226–247; these read MEEP…AAKY and RPSS…DKRP. Positions 20–31 are enriched in gly residues; sequence ANGGGGGGGGSD. The segment covering 38-66 has biased composition (pro residues); that stretch reads SPSPAPASPAAPCPLPLPRRRPPPPPPPR. Residues 94–104 show a composition bias toward gly residues; sequence TGAGGGGGGGG. Residues 144-173 show a composition bias toward low complexity; the sequence is DGSAPAGTAAKANPGTAAGAAGAAGAAKAQ. A DNA-binding region (homeobox) is located at residues 244–303; sequence DKRPRTAFTAEQLQRLKAEFQANRYITEQRRQSLAQELSLNESRVKIWFQNKRAKIKKAT.

The protein belongs to the engrailed homeobox family.

It is found in the nucleus. Required for proper formation of the apical ectodermal ridge and correct dorsal-ventral patterning in the limb. The protein is Homeobox protein engrailed-1 (EN1) of Gallus gallus (Chicken).